Here is a 537-residue protein sequence, read N- to C-terminus: Phosphoenolpyruvate carboxykinase (ATP) (537 aa).

Substrate-binding residues include Arg-61, Tyr-195, and Lys-201. Residues Lys-201, His-220, and 236–244 contribute to the ATP site; that span reads GLSGTGKTT. 2 residues coordinate Mn(2+): Lys-201 and His-220. Asp-257 lines the Mn(2+) pocket. Residues Glu-285, Arg-323, and Thr-448 each coordinate ATP. A substrate-binding site is contributed by Arg-323.

It belongs to the phosphoenolpyruvate carboxykinase (ATP) family. Mn(2+) is required as a cofactor.

Its subcellular location is the cytoplasm. It carries out the reaction oxaloacetate + ATP = phosphoenolpyruvate + ADP + CO2. It functions in the pathway carbohydrate biosynthesis; gluconeogenesis. In terms of biological role, involved in the gluconeogenesis. Catalyzes the conversion of oxaloacetate (OAA) to phosphoenolpyruvate (PEP) through direct phosphoryl transfer between the nucleoside triphosphate and OAA. The chain is Phosphoenolpyruvate carboxykinase (ATP) from Rhodopseudomonas palustris (strain TIE-1).